The chain runs to 159 residues: SsrA-binding protein (159 aa).

Over residues R140 to R150 the composition is skewed to basic and acidic residues. The segment at R140–R159 is disordered.

This sequence belongs to the SmpB family.

It localises to the cytoplasm. Its function is as follows. Required for rescue of stalled ribosomes mediated by trans-translation. Binds to transfer-messenger RNA (tmRNA), required for stable association of tmRNA with ribosomes. tmRNA and SmpB together mimic tRNA shape, replacing the anticodon stem-loop with SmpB. tmRNA is encoded by the ssrA gene; the 2 termini fold to resemble tRNA(Ala) and it encodes a 'tag peptide', a short internal open reading frame. During trans-translation Ala-aminoacylated tmRNA acts like a tRNA, entering the A-site of stalled ribosomes, displacing the stalled mRNA. The ribosome then switches to translate the ORF on the tmRNA; the nascent peptide is terminated with the 'tag peptide' encoded by the tmRNA and targeted for degradation. The ribosome is freed to recommence translation, which seems to be the essential function of trans-translation. This Alcanivorax borkumensis (strain ATCC 700651 / DSM 11573 / NCIMB 13689 / SK2) protein is SsrA-binding protein.